A 78-amino-acid chain; its full sequence is Large ribosomal subunit protein bL28 (78 aa).

The tract at residues 1 to 20 (MSRVCQVTGKGPVTGNNISH) is disordered.

The protein belongs to the bacterial ribosomal protein bL28 family.

This chain is Large ribosomal subunit protein bL28, found in Azotobacter vinelandii (strain DJ / ATCC BAA-1303).